The chain runs to 620 residues: Chaperone protein HscA homolog (620 aa).

The protein belongs to the heat shock protein 70 family.

Chaperone involved in the maturation of iron-sulfur cluster-containing proteins. Has a low intrinsic ATPase activity which is markedly stimulated by HscB. In Shewanella putrefaciens (strain CN-32 / ATCC BAA-453), this protein is Chaperone protein HscA homolog.